The primary structure comprises 579 residues: A-type ATP synthase subunit A (579 aa).

229 to 236 (GPFGSGKT) is a binding site for ATP.

It belongs to the ATPase alpha/beta chains family. As to quaternary structure, has multiple subunits with at least A(3), B(3), C, D, E, F, H, I and proteolipid K(x).

The protein resides in the cell membrane. The catalysed reaction is ATP + H2O + 4 H(+)(in) = ADP + phosphate + 5 H(+)(out). In terms of biological role, component of the A-type ATP synthase that produces ATP from ADP in the presence of a proton gradient across the membrane. The A chain is the catalytic subunit. This Methanocella arvoryzae (strain DSM 22066 / NBRC 105507 / MRE50) protein is A-type ATP synthase subunit A.